Here is a 175-residue protein sequence, read N- to C-terminus: Apoptosis regulatory protein Siva (175 aa).

Tyr-34 bears the Phosphotyrosine; by ABL2 mark. Positions 36-55 are interaction with BCL2L1 isoform Bcl-x(L) and inhibition of BCL2L1 anti-apoptotic activity; the sequence is QEVFEKTKRLLFLGAQAYLD. Ser-70 carries the post-translational modification Phosphoserine. Positions 105–123 are interaction with coxsackievirus B3 VP2; the sequence is DPSGVASIACSSCVRAVDG.

As to quaternary structure, binds through its N-terminal region to the C-terminus of CD27 and to PXMP2/PMP22. Binds to the C-terminus of TNFRSF18/GITR. Isoform 1 binds to BCL2L1/BCLX isoform Bcl-x(L) but not to BAX. In terms of assembly, (Microbial infection) Interacts with coxsackievirus B3 capsid protein VP2; this interaction inhibits the binding of SIVA1 to CD27. Requires Zn(2+) as cofactor. Phosphorylated by ABL2/ARG in response to oxidative stress. In terms of tissue distribution, ubiquitous. Mostly expressed in thymus, testis, ovary, prostate, small intestine and spleen and less in colon.

The protein resides in the cytoplasm. It localises to the nucleus. Induces CD27-mediated apoptosis. Inhibits BCL2L1 isoform Bcl-x(L) anti-apoptotic activity. Inhibits activation of NF-kappa-B and promotes T-cell receptor-mediated apoptosis. The polypeptide is Apoptosis regulatory protein Siva (SIVA1) (Homo sapiens (Human)).